The chain runs to 587 residues: Glutathione hydrolase proenzyme (587 aa).

Positions 1 to 28 are cleaved as a signal peptide; sequence MKRTWNVCLTALLSVLLVAGSVPFHAEA. The propeptide occupies 29-35; that stretch reads KKPPKSY. Residue arginine 113 participates in L-glutamate binding. The active-site Nucleophile is threonine 403. Residues threonine 421, glutamate 423, glutamate 442, aspartate 445, 464–465, and 485–486 each bind L-glutamate; these read SS and GG.

It belongs to the gamma-glutamyltransferase family. As to quaternary structure, this enzyme consists of two polypeptide chains, which are synthesized in precursor form from a single polypeptide. In terms of processing, cleaved by autocatalysis into a large and small subunit.

Its subcellular location is the secreted. It carries out the reaction an N-terminal (5-L-glutamyl)-[peptide] + an alpha-amino acid = 5-L-glutamyl amino acid + an N-terminal L-alpha-aminoacyl-[peptide]. It catalyses the reaction glutathione + H2O = L-cysteinylglycine + L-glutamate. The catalysed reaction is an S-substituted glutathione + H2O = an S-substituted L-cysteinylglycine + L-glutamate. It participates in sulfur metabolism; glutathione metabolism. With respect to regulation, inhibited by glucose. Functionally, cleaves the gamma-glutamyl bond of extracellular glutathione (gamma-Glu-Cys-Gly), glutathione conjugates, and other gamma-glutamyl compounds. The metabolism of glutathione releases free glutamate and the dipeptide cysteinyl-glycine, which is hydrolyzed to cysteine and glycine by dipeptidases. Uses glutamine as a gamma-glutamyl donor and acceptor for gamma-polyglutamic acid synthesis. Dipeptides are better gamma-glutamyl acceptors than free amino acids. The chain is Glutathione hydrolase proenzyme (ggt) from Bacillus subtilis subsp. natto.